Here is a 381-residue protein sequence, read N- to C-terminus: L-lactate dehydrogenase (381 aa).

The FMN hydroxy acid dehydrogenase domain maps to 1–380; that stretch reads MIISSASDYR…KPEALVDLSK (380 aa). Tyrosine 24 is a binding site for substrate. FMN is bound by residues serine 106 and glutamine 127. Tyrosine 129 is a substrate binding site. Position 155 (threonine 155) interacts with FMN. Arginine 164 is a binding site for substrate. FMN is bound at residue lysine 251. Histidine 275 functions as the Proton acceptor in the catalytic mechanism. Residue arginine 278 participates in substrate binding. 306-330 is a binding site for FMN; that stretch reads DSGIRNGLDIVRMLALGADATMLGR.

It belongs to the FMN-dependent alpha-hydroxy acid dehydrogenase family. The cofactor is FMN.

Its subcellular location is the cell inner membrane. The catalysed reaction is (S)-lactate + A = pyruvate + AH2. Functionally, catalyzes the conversion of L-lactate to pyruvate. Is coupled to the respiratory chain. The sequence is that of L-lactate dehydrogenase from Haemophilus influenzae (strain PittEE).